The sequence spans 257 residues: 1-(5-phosphoribosyl)-5-[(5-phosphoribosylamino)methylideneamino] imidazole-4-carboxamide isomerase (257 aa).

The active-site Proton acceptor is the Asp-8. Asp-129 serves as the catalytic Proton donor.

This sequence belongs to the HisA/HisF family.

It localises to the cytoplasm. The enzyme catalyses 1-(5-phospho-beta-D-ribosyl)-5-[(5-phospho-beta-D-ribosylamino)methylideneamino]imidazole-4-carboxamide = 5-[(5-phospho-1-deoxy-D-ribulos-1-ylimino)methylamino]-1-(5-phospho-beta-D-ribosyl)imidazole-4-carboxamide. The protein operates within amino-acid biosynthesis; L-histidine biosynthesis; L-histidine from 5-phospho-alpha-D-ribose 1-diphosphate: step 4/9. The protein is 1-(5-phosphoribosyl)-5-[(5-phosphoribosylamino)methylideneamino] imidazole-4-carboxamide isomerase of Gloeothece citriformis (strain PCC 7424) (Cyanothece sp. (strain PCC 7424)).